The chain runs to 465 residues: Light-independent protochlorophyllide reductase subunit N (465 aa).

Positions 23, 48, and 108 each coordinate [4Fe-4S] cluster.

Belongs to the BchN/ChlN family. In terms of assembly, protochlorophyllide reductase is composed of three subunits; ChlL, ChlN and ChlB. Forms a heterotetramer of two ChlB and two ChlN subunits. [4Fe-4S] cluster serves as cofactor.

It carries out the reaction chlorophyllide a + oxidized 2[4Fe-4S]-[ferredoxin] + 2 ADP + 2 phosphate = protochlorophyllide a + reduced 2[4Fe-4S]-[ferredoxin] + 2 ATP + 2 H2O. Its pathway is porphyrin-containing compound metabolism; chlorophyll biosynthesis (light-independent). Functionally, component of the dark-operative protochlorophyllide reductase (DPOR) that uses Mg-ATP and reduced ferredoxin to reduce ring D of protochlorophyllide (Pchlide) to form chlorophyllide a (Chlide). This reaction is light-independent. The NB-protein (ChlN-ChlB) is the catalytic component of the complex. In Trichodesmium erythraeum (strain IMS101), this protein is Light-independent protochlorophyllide reductase subunit N.